Consider the following 213-residue polypeptide: Histone H1.1 (213 aa).

The disordered stretch occupies residues 1-43; that stretch reads MSETAPVAQAASTATEKPAAAKKTKKPAKAAAPRKKPAGPSVS. Ser2 bears the N-acetylserine mark. A phosphoserine mark is found at Ser2 and Ser12. A compositionally biased stretch (low complexity) spans 8-18; sequence AQAASTATEKP. N6-acetyllysine is present on Lys17. A compositionally biased stretch (basic residues) spans 20-37; sequence AAKKTKKPAKAAAPRKKP. Lys36 carries the post-translational modification N6-(beta-hydroxybutyryl)lysine. An H15 domain is found at 38 to 111; sequence AGPSVSELIV…GAAGSFKLNK (74 aa). A Phosphoserine modification is found at Ser43. Lys54 is subject to N6-(beta-hydroxybutyryl)lysine. Arg56 is modified (citrulline). At Lys66 the chain carries N6-(beta-hydroxybutyryl)lysine. A Phosphoserine modification is found at Ser67. N6-acetyllysine is present on Lys77. At Lys87 the chain carries N6-(beta-hydroxybutyryl)lysine. Lys92 is modified (N6-(beta-hydroxybutyryl)lysine; alternate). Lys92 is subject to N6-acetyllysine; alternate. Ser106 bears the Phosphoserine mark. An N6-(beta-hydroxybutyryl)lysine modification is found at Lys108. Positions 112–213 are disordered; it reads KAESKAITTK…KPKKAAPKKK (102 aa). A compositionally biased stretch (low complexity) spans 120 to 144; sequence TKVSVKAKASGAAKKPKKTAGAAAK. The residue at position 121 (Lys121) is an N6-acetyllysine. Basic residues-rich tracts occupy residues 145–178 and 185–213; these read KTVKTPKKPKKPAVSKKTSKSPKKPKVVKAKKVA and KAVKPKASKAKVTKPKTPAKPKKAAPKKK. Position 201 is a phosphothreonine (Thr201).

This sequence belongs to the histone H1/H5 family. As to quaternary structure, interacts with DFFB. In terms of processing, H1 histones are progressively phosphorylated during the cell cycle, becoming maximally phosphorylated during late G2 phase and M phase, and being dephosphorylated sharply thereafter. Citrullination at Arg-56 (H1R54ci) by PADI4 takes place within the DNA-binding site of H1 and results in its displacement from chromatin and global chromatin decondensation, thereby promoting pluripotency and stem cell maintenance. Post-translationally, hydroxybutyrylation of histones is induced by starvation. Restricted to thymus, testis and spleen. Present also in lymphocytic and neuronal cells. Increases in testis starting with a low level at day 5 and reaching high concentrations in 20-day old and adult animals.

It localises to the nucleus. It is found in the chromosome. Histone H1 protein binds to linker DNA between nucleosomes forming the macromolecular structure known as the chromatin fiber. Histones H1 are necessary for the condensation of nucleosome chains into higher-order structured fibers. Also acts as a regulator of individual gene transcription through chromatin remodeling, nucleosome spacing and DNA methylation. In Mus musculus (Mouse), this protein is Histone H1.1.